The chain runs to 83 residues: Kappa-ctenitoxin-Pn1a (83 aa).

Positions 1–21 are cleaved as a signal peptide; the sequence is MWFKIQVLVLAITLITLGIQA. Positions 22–37 are excised as a propeptide; sequence EPNSSPNNPLIVEEDR. Disulfide bonds link Cys-40–Cys-55, Cys-47–Cys-60, Cys-54–Cys-71, and Cys-62–Cys-69. A propeptide spanning residues 78–83 is cleaved from the precursor; it reads LFGFGK.

This sequence belongs to the neurotoxin 02 (plectoxin) family. Expressed by the venom gland.

It localises to the secreted. Its function is as follows. Antagonist of L-type calcium channels (Cav1/CACNA1). In GH3 neuroendocrinal cell line, it reversibly inhibits the A-type potassium current but does not block other potassium currents or calcium channels. Shows an important acetylcholine-mediated antiarrhythmogenic effect in isolated hearts. In vivo, causes paralysis in the posterior limbs and gradual decreases in movement and aggression during 24 hours at dose levels of 5 ug per mouse. The chain is Kappa-ctenitoxin-Pn1a from Phoneutria nigriventer (Brazilian armed spider).